Here is a 163-residue protein sequence, read N- to C-terminus: Cyanate hydratase (163 aa).

Catalysis depends on residues arginine 103, glutamate 106, and serine 129.

This sequence belongs to the cyanase family.

It catalyses the reaction cyanate + hydrogencarbonate + 3 H(+) = NH4(+) + 2 CO2. Its function is as follows. Catalyzes the reaction of cyanate with bicarbonate to produce ammonia and carbon dioxide. This Talaromyces stipitatus (strain ATCC 10500 / CBS 375.48 / QM 6759 / NRRL 1006) (Penicillium stipitatum) protein is Cyanate hydratase.